A 68-amino-acid polypeptide reads, in one-letter code: Alpha-conotoxin Lp1.1 (68 aa).

Residues 1-21 (MGMRMMFIMFMLVVLATTVVT) form the signal peptide. The propeptide occupies 22–48 (FTSDRALDAMNAAASNKASRLIALAVR). Intrachain disulfides connect Cys50-Cys56 and Cys51-Cys64. Positions 52–54 (ARA) are lacks the Ser-Xaa-Pro motif that is crucial for potent interaction with nAChR. Residue Gly65 is modified to Glycine amide. Residues 66–68 (GGR) constitute a propeptide that is removed on maturation.

The protein belongs to the conotoxin A superfamily. In terms of tissue distribution, expressed by the venom duct.

Its subcellular location is the secreted. In terms of biological role, alpha-conotoxins act on postsynaptic membranes, they bind to the nicotinic acetylcholine receptors (nAChR) and thus inhibit them. Synthetic peptide inhibits alpha-6/alpha-3/beta-2 and alpha-3/beta-2 nicotinic acetylcholine receptors and causes uncoordinated movement when intramuscularly injected into goldfish. Has a distinct nAChR binding mode from other alpha-conotoxins, due to a different three residue motif (Ala-Xaa-Ala instead of the conserved Ser-Xaa-Pro motif). In Conus leopardus (Leopard cone), this protein is Alpha-conotoxin Lp1.1.